The chain runs to 437 residues: Transcription factor AP-2-alpha (437 aa).

Residue Lys10 forms a Glycyl lysine isopeptide (Lys-Gly) (interchain with G-Cter in SUMO); alternate linkage. Lys10 participates in a covalent cross-link: Glycyl lysine isopeptide (Lys-Gly) (interchain with G-Cter in SUMO2); alternate. A disordered region spans residues 14 to 107; it reads CEDRHDGASN…GQRQSQESGL (94 aa). The PPxY motif motif lies at 57–62; it reads YFPPPY. 2 stretches are compositionally biased toward low complexity: residues 65 to 74 and 88 to 101; these read IYPQSQDPYS and QPQP…GQRQ. Residues Lys177 and Lys184 each participate in a glycyl lysine isopeptide (Lys-Gly) (interchain with G-Cter in SUMO2) cross-link. A Phosphoserine; by PKA modification is found at Ser239. Positions 280-410 are H-S-H (helix-span-helix), dimerization; the sequence is RRKAANVTLL…YLTEALKAMD (131 aa). Polar residues predominate over residues 414 to 427; the sequence is LSNNPNSHTDNNAK. The tract at residues 414 to 437 is disordered; it reads LSNNPNSHTDNNAKSSDKEEKHRK. Over residues 428–437 the composition is skewed to basic and acidic residues; that stretch reads SSDKEEKHRK.

This sequence belongs to the AP-2 family. In terms of assembly, binds DNA as a dimer. Can form homodimers or heterodimers with other AP-2 family members. Interacts with WWOX. Interacts with CITED4. Interacts with UBE2I. Interacts with RALBP1 in a complex also containing EPN1 and NUMB during interphase and mitosis. Interacts with KCTD1; this interaction represses transcription activation. Interacts (via C-terminus) with CITED2 (via C-terminus); the interaction stimulates TFAP2A-transcriptional activation. Interacts (via N-terminus) with EP300 (via N-terminus); the interaction requires CITED2. Interacts with KCTD15; this interaction inhibits TFAP2A transcriptional activation. Sumoylated on Lys-10; which inhibits transcriptional activity.

The protein resides in the nucleus. In terms of biological role, sequence-specific DNA-binding protein that interacts with inducible viral and cellular enhancer elements to regulate transcription of selected genes. AP-2 factors bind to the consensus sequence 5'-GCCNNNGGC-3' and activate genes involved in a large spectrum of important biological functions including proper eye, face, body wall, limb and neural tube development. They also suppress a number of genes including MCAM/MUC18, C/EBP alpha and MYC. AP-2-alpha is the only AP-2 protein required for early morphogenesis of the lens vesicle. Together with the CITED2 coactivator, stimulates the PITX2 P1 promoter transcription activation. Associates with chromatin to the PITX2 P1 promoter region. The chain is Transcription factor AP-2-alpha (TFAP2A) from Bos taurus (Bovine).